A 499-amino-acid chain; its full sequence is L-arabinose isomerase (499 aa).

4 residues coordinate Mn(2+): E306, E333, H350, and H449.

This sequence belongs to the arabinose isomerase family. Mn(2+) is required as a cofactor.

It carries out the reaction beta-L-arabinopyranose = L-ribulose. Its pathway is carbohydrate degradation; L-arabinose degradation via L-ribulose; D-xylulose 5-phosphate from L-arabinose (bacterial route): step 1/3. Functionally, catalyzes the conversion of L-arabinose to L-ribulose. The polypeptide is L-arabinose isomerase (Tolumonas auensis (strain DSM 9187 / NBRC 110442 / TA 4)).